A 155-amino-acid polypeptide reads, in one-letter code: Small ribosomal subunit protein uS7cz/uS7cy (155 aa).

It belongs to the universal ribosomal protein uS7 family. As to quaternary structure, part of the 30S ribosomal subunit.

It localises to the plastid. One of the primary rRNA binding proteins, it binds directly to 16S rRNA where it nucleates assembly of the head domain of the 30S subunit. This is Small ribosomal subunit protein uS7cz/uS7cy (rps7-A) from Cuscuta exaltata (Tall dodder).